The sequence spans 394 residues: Probable peptidoglycan glycosyltransferase FtsW (394 aa).

The Cytoplasmic segment spans residues methionine 1 to alanine 27. The chain crosses the membrane as a helical span at residues leucine 28–isoleucine 48. The Periplasmic portion of the chain corresponds to proline 49 to alanine 66. The helical transmembrane segment at isoleucine 67–tryptophan 87 threads the bilayer. The Cytoplasmic segment spans residues glutamate 88–lysine 93. The chain crosses the membrane as a helical span at residues isoleucine 94–glycine 114. At alanine 115–serine 120 the chain is on the periplasmic side. A helical membrane pass occupies residues leucine 121–alanine 141. The Cytoplasmic segment spans residues serine 142–histidine 155. The next 2 membrane-spanning stretches (helical) occupy residues valine 156–proline 176 and aspartate 177–alanine 197. A topological domain (cytoplasmic) is located at residue lysine 198. The chain crosses the membrane as a helical span at residues isoleucine 199–threonine 219. The Periplasmic portion of the chain corresponds to alanine 220–aspartate 277. Residues phenylalanine 278–leucine 298 form a helical membrane-spanning segment. Residues leucine 299 to glycine 322 are Cytoplasmic-facing. A helical membrane pass occupies residues phenylalanine 323–alanine 343. The Periplasmic portion of the chain corresponds to leucine 344 to threonine 353. The helical transmembrane segment at phenylalanine 354–leucine 374 threads the bilayer. The Cytoplasmic portion of the chain corresponds to leucine 375–aspartate 394.

The protein belongs to the SEDS family. FtsW subfamily.

Its subcellular location is the cell inner membrane. The catalysed reaction is [GlcNAc-(1-&gt;4)-Mur2Ac(oyl-L-Ala-gamma-D-Glu-L-Lys-D-Ala-D-Ala)](n)-di-trans,octa-cis-undecaprenyl diphosphate + beta-D-GlcNAc-(1-&gt;4)-Mur2Ac(oyl-L-Ala-gamma-D-Glu-L-Lys-D-Ala-D-Ala)-di-trans,octa-cis-undecaprenyl diphosphate = [GlcNAc-(1-&gt;4)-Mur2Ac(oyl-L-Ala-gamma-D-Glu-L-Lys-D-Ala-D-Ala)](n+1)-di-trans,octa-cis-undecaprenyl diphosphate + di-trans,octa-cis-undecaprenyl diphosphate + H(+). Its pathway is cell wall biogenesis; peptidoglycan biosynthesis. Functionally, peptidoglycan polymerase that is essential for cell division. The protein is Probable peptidoglycan glycosyltransferase FtsW of Haemophilus influenzae (strain ATCC 51907 / DSM 11121 / KW20 / Rd).